The sequence spans 152 residues: MKQRTFTMLKPDAVKRRLTGEILTRFEKRGLKVIAAKTLMISEDLAKTHYGEHSDKPFFNDLISYITSGPVFAMVLEGDDVISLVRKMVGATNPKEADIGTIRGDYGIDTGRNIVHASDSEESAQREINLFFDETEFCDYELPDEDIIYEEP.

ATP contacts are provided by K10, F58, R86, T92, R103, and N113. Residue H116 is the Pros-phosphohistidine intermediate of the active site.

It belongs to the NDK family. The cofactor is Mg(2+).

Its subcellular location is the cytoplasm. The enzyme catalyses a 2'-deoxyribonucleoside 5'-diphosphate + ATP = a 2'-deoxyribonucleoside 5'-triphosphate + ADP. It catalyses the reaction a ribonucleoside 5'-diphosphate + ATP = a ribonucleoside 5'-triphosphate + ADP. Functionally, major role in the synthesis of nucleoside triphosphates other than ATP. The ATP gamma phosphate is transferred to the NDP beta phosphate via a ping-pong mechanism, using a phosphorylated active-site intermediate. The sequence is that of Nucleoside diphosphate kinase from Methanosphaera stadtmanae (strain ATCC 43021 / DSM 3091 / JCM 11832 / MCB-3).